A 262-amino-acid polypeptide reads, in one-letter code: Expansin-A13 (262 aa).

The first 22 residues, 1–22 (MAGVARMLAAVVCAIMPAAAMA), serve as a signal peptide directing secretion. Residues 52–167 (GGACGYGNLY…QRVPCMKKGG (116 aa)) form the Expansin-like EG45 domain. Residues 177-257 (YFQLVLLTNV…GWRFGQTFAS (81 aa)) enclose the Expansin-like CBD domain.

The protein belongs to the expansin family. Expansin A subfamily. Expressed in roots and flowers.

It is found in the secreted. Its subcellular location is the cell wall. The protein localises to the membrane. Its function is as follows. May cause loosening and extension of plant cell walls by disrupting non-covalent bonding between cellulose microfibrils and matrix glucans. No enzymatic activity has been found. May be required for rapid internodal elongation in deepwater rice during submergence. This Oryza sativa subsp. japonica (Rice) protein is Expansin-A13 (EXPA13).